Consider the following 276-residue polypeptide: 2,3,4,5-tetrahydropyridine-2,6-dicarboxylate N-succinyltransferase (276 aa).

The substrate site is built by arginine 108 and aspartate 145.

Belongs to the transferase hexapeptide repeat family. Homotrimer.

It is found in the cytoplasm. The enzyme catalyses (S)-2,3,4,5-tetrahydrodipicolinate + succinyl-CoA + H2O = (S)-2-succinylamino-6-oxoheptanedioate + CoA. It functions in the pathway amino-acid biosynthesis; L-lysine biosynthesis via DAP pathway; LL-2,6-diaminopimelate from (S)-tetrahydrodipicolinate (succinylase route): step 1/3. The polypeptide is 2,3,4,5-tetrahydropyridine-2,6-dicarboxylate N-succinyltransferase (Caulobacter vibrioides (strain ATCC 19089 / CIP 103742 / CB 15) (Caulobacter crescentus)).